The chain runs to 400 residues: MTTIGTPLSPRATKVMLLGSGELGREVLIALQRLGVETIAVDRYENAPGHQVAHHARTIAMSDPDQLRALIEAERPDLVVPEIEAIATPVLEALEAEGVTTVIPTARATRLTMDREGIRRLAAETLGVPTSPYRFCDSLAELQAAIDDEIGYPCVVKPVMSSSGKGQSKINGPDEVAAAWEYAMAGGRVSHTRIIVEGFVDFDYEITLLTVRARGADGEIATQFCEPIGHRQVGGDYVESWQPHPMPATALERAQEIAGAVTGNLGGQGIFGVELFVKGDQVWFSEVSPRPHDTGMVTMVTQWQNEFELHARAILGLPVDTTLRAPGASAVIYGGVDATGVVFDGVDAALQVPHTDIRLFGKPESFVKRRMGVALAFDDDVQTARRNAAEAASRMKPRAV.

Residues 22–23 (EL) and Glu-82 contribute to the N(1)-(5-phospho-beta-D-ribosyl)glycinamide site. Residues Arg-115, Lys-157, 162-167 (SSGKGQ), 197-200 (EGFV), and Glu-205 contribute to the ATP site. Residues 120 to 315 (RLAAETLGVP…EFELHARAIL (196 aa)) enclose the ATP-grasp domain. The Mg(2+) site is built by Glu-274 and Glu-286. N(1)-(5-phospho-beta-D-ribosyl)glycinamide is bound by residues Asp-293, Lys-362, and 369–370 (RR).

Belongs to the PurK/PurT family. As to quaternary structure, homodimer.

The catalysed reaction is N(1)-(5-phospho-beta-D-ribosyl)glycinamide + formate + ATP = N(2)-formyl-N(1)-(5-phospho-beta-D-ribosyl)glycinamide + ADP + phosphate + H(+). It functions in the pathway purine metabolism; IMP biosynthesis via de novo pathway; N(2)-formyl-N(1)-(5-phospho-D-ribosyl)glycinamide from N(1)-(5-phospho-D-ribosyl)glycinamide (formate route): step 1/1. Its function is as follows. Involved in the de novo purine biosynthesis. Catalyzes the transfer of formate to 5-phospho-ribosyl-glycinamide (GAR), producing 5-phospho-ribosyl-N-formylglycinamide (FGAR). Formate is provided by PurU via hydrolysis of 10-formyl-tetrahydrofolate. The polypeptide is Formate-dependent phosphoribosylglycinamide formyltransferase (Mycolicibacterium smegmatis (strain ATCC 700084 / mc(2)155) (Mycobacterium smegmatis)).